A 93-amino-acid chain; its full sequence is Large ribosomal subunit protein uL23cy (93 aa).

This sequence belongs to the universal ribosomal protein uL23 family. Part of the 50S ribosomal subunit.

The protein resides in the plastid. It is found in the chloroplast. Its function is as follows. Binds to 23S rRNA. The sequence is that of Large ribosomal subunit protein uL23cy (rpl23-B) from Agrostis stolonifera (Creeping bentgrass).